The following is a 605-amino-acid chain: F-box/WD repeat-containing protein 1A (605 aa).

Residues 128–177 are homodimerization domain D; the sequence is ASYEKEKELCVKYFEQWSESDQVEFVEHLISQMCHYQHGHINSYLKPMLQ. In terms of domain architecture, F-box spans 182-228; that stretch reads TALPARGLDHIAENILSYLDAKSLCAAELVCKEWYRVTSDGMLWKKL. Residues 190-228 are required for down-regulation of SNAI1; the sequence is DHIAENILSYLDAKSLCAAELVCKEWYRVTSDGMLWKKL. 7 WD repeats span residues 301-338, 341-378, 381-418, 424-461, 464-503, 505-541, and 553-590; these read ETSK…CKRI, GHTG…MLNT, HHCE…DITL, GHRA…FVRT, GHKR…RVLE, HEEL…DPRA, and EHSG…AAHA.

In terms of assembly, homodimer. Self-associates. Component of the SCF(BTRC) complex, composed of SKP1, CUL1 and BTRC. Direct interaction with SKP1 with SKP1 occurs via the F-box domain. Interacts with phosphorylated ubiquitination substrates SMAD3 and SMAD4. Interacts with phosphorylated ubiquitination substrates CTNNB1, NFKBIA, NFKBIB, NFKBIE, NFKB1/nuclear factor NF-kappa-B p105 subunit, ATF4, CDC25A, DLG1, FBXO5 and SNAI1; the interaction requires the phosphorylation of the 2 serine residues in the substrate destruction motif D-S-G-X(2,3,4)-S. Binds UBQLN1. Interacts with CDC34 and UBE2R2. Interacts with FBXW11. Interacts with CUL4A and DDB1. Part of a SCF(BTRC)-like complex lacking CUL1, which is associated with phosphorylated NKBIA and RELA; RELA interacts directly with NFKBIA. Interacts with the phosphorylated form of GLI3. Interacts with CLU. Interacts with PER1 (phosphorylated), PER2 (phosphorylated) and PER3. Interacts with phosphorylated ubiquitination substrate CEP68. Interacts with ZC3H12A; this interaction occurs when ZC3H12A is phosphorylated in a IKBKB/IKKB-dependent manner. Interacts with HSF1; this interaction occurs during mitosis and induces HSF1 ubiquitin-dependent degradation, a process inhibited by CDC20. Interacts with NFE2L1. Interacts with INAVA. Interacts with IL10RA; this interaction leads to IL10RA ubiquitination and subsequent degradation. Interacts with REST. Interacts with KLF4; this interaction leads to KLF4 ubiquitination and subsequent degradation. Interacts with UBR2, as part of a SCF(BTRC) complex; the interaction mediates 'Lys-48'-linked ubiquitination of UBR2 and is regulated by DUSP22 in the T-cell receptor signaling pathway. Ubiquitinated via 'Lys-11'-linked polyubiquitin by some cullin-5-RING E3 ubiquitin-protein ligase complex (ECS complex), leading to its degradation. Deubiquitinated by OTUD5, promoting its stability. Expressed in heart, brain, liver, skeletal muscle and, most strongly, in testis.

The protein localises to the cytoplasm. It is found in the nucleus. It functions in the pathway protein modification; protein ubiquitination. In terms of biological role, substrate recognition component of a SCF (SKP1-CUL1-F-box protein) E3 ubiquitin-protein ligase complex which mediates the ubiquitination and subsequent proteasomal degradation of target proteins. Recognizes and binds to phosphorylated target proteins. SCF(BTRC) mediates the ubiquitination of phosphorylated NFKB, ATF4, CDC25A, DLG1, FBXO5, PER1, SMAD3, SMAD4, SNAI1 and probably NFKB2. SCF(BTRC) mediates the ubiquitination of CTNNB1 and participates in Wnt signaling. SCF(BTRC) mediates the ubiquitination of NFKBIA, NFKBIB and NFKBIE; the degradation frees the associated NFKB1 to translocate into the nucleus and to activate transcription. Ubiquitination of NFKBIA occurs at 'Lys-21' and 'Lys-22'. The SCF(FBXW11) complex also regulates NF-kappa-B by mediating ubiquitination of phosphorylated NFKB1: specifically ubiquitinates the p105 form of NFKB1, leading to its degradation. SCF(BTRC) mediates the ubiquitination of CEP68; this is required for centriole separation during mitosis. SCF(BTRC) mediates the ubiquitination and subsequent degradation of nuclear NFE2L1. Has an essential role in the control of the clock-dependent transcription via degradation of phosphorylated PER1 and PER2. May be involved in ubiquitination and subsequent proteasomal degradation through a DBB1-CUL4 E3 ubiquitin-protein ligase. Required for activation of NFKB-mediated transcription by IL1B, MAP3K14, MAP3K1, IKBKB and TNF. Required for proteolytic processing of GLI3. Mediates ubiquitination of REST, thereby leading to its proteasomal degradation. SCF(BTRC) mediates the ubiquitination and subsequent proteasomal degradation of KLF4; thereby negatively regulating cell pluripotency maintenance and embryogenesis. SCF(BTRC) acts as a regulator of mTORC1 signaling pathway by catalyzing ubiquitination and subsequent proteasomal degradation of phosphorylated DEPTOR, TFE3 and MITF. SCF(BTRC) directs 'Lys-48'-linked ubiquitination of UBR2 in the T-cell receptor signaling pathway. The protein is F-box/WD repeat-containing protein 1A of Mus musculus (Mouse).